A 291-amino-acid chain; its full sequence is Pyridoxal 5'-phosphate synthase subunit PdxS (291 aa).

Asp23 contacts D-ribose 5-phosphate. Residue Lys80 is the Schiff-base intermediate with D-ribose 5-phosphate of the active site. Gly152 contributes to the D-ribose 5-phosphate binding site. D-glyceraldehyde 3-phosphate is bound at residue Arg164. Residues Gly213 and 234 to 235 (GS) contribute to the D-ribose 5-phosphate site.

The protein belongs to the PdxS/SNZ family. In terms of assembly, in the presence of PdxT, forms a dodecamer of heterodimers.

It carries out the reaction aldehydo-D-ribose 5-phosphate + D-glyceraldehyde 3-phosphate + L-glutamine = pyridoxal 5'-phosphate + L-glutamate + phosphate + 3 H2O + H(+). The protein operates within cofactor biosynthesis; pyridoxal 5'-phosphate biosynthesis. Catalyzes the formation of pyridoxal 5'-phosphate from ribose 5-phosphate (RBP), glyceraldehyde 3-phosphate (G3P) and ammonia. The ammonia is provided by the PdxT subunit. Can also use ribulose 5-phosphate and dihydroxyacetone phosphate as substrates, resulting from enzyme-catalyzed isomerization of RBP and G3P, respectively. This chain is Pyridoxal 5'-phosphate synthase subunit PdxS, found in Methanocorpusculum labreanum (strain ATCC 43576 / DSM 4855 / Z).